The following is a 264-amino-acid chain: Interleukin-33 (264 aa).

Residues 1 to 67 (MRPRMKYSNS…ETCYFGKEPA (67 aa)) are homeodomain-like HTH domain. Positions 1 to 101 (MRPRMKYSNS…RSLLGSIQAF (101 aa)) are excised as a propeptide. The interaction with RELA stretch occupies residues 66–108 (PAKRYSLKSGSKHEGRLSTCLPDSRKRSLLGSIQAFAASVDTL).

The protein belongs to the IL-1 family. Highly divergent. In terms of assembly, forms a 1:1:1 heterotrimeric complex with its primary high-affinity receptor IL1RL1 and the coreceptor IL1RAP. Interacts with cargo receptor TMED10; the interaction mediates the translocation from the cytoplasm into the ERGIC (endoplasmic reticulum-Golgi intermediate compartment) and thereby secretion. In terms of processing, the full-length protein can be released from cells and is able to signal via the IL1RL1/ST2 receptor. However, proteolytic processing by CELA1, CSTG/cathepsin G and ELANE/neutrophil elastase produces C-terminal peptides that are more active than the unprocessed full-length protein. May also be proteolytically processed by calpains. Proteolytic cleavage mediated by apoptotic caspases including CASP3 and CASP7 results in IL33 inactivation. In vitro proteolytic cleavage by CASP1 was reported but could not be confirmed in vivo suggesting that IL33 is probably not a direct substrate for that caspase.

The protein resides in the nucleus. It localises to the chromosome. Its subcellular location is the cytoplasm. It is found in the cytoplasmic vesicle. The protein localises to the secretory vesicle. The protein resides in the secreted. Its function is as follows. Cytokine that binds to and signals through the IL1RL1/ST2 receptor which in turn activates NF-kappa-B and MAPK signaling pathways in target cells. Involved in the maturation of Th2 cells inducing the secretion of T-helper type 2-associated cytokines. Also involved in activation of mast cells, basophils, eosinophils and natural killer cells. Acts as a chemoattractant for Th2 cells, and may function as an 'alarmin', that amplifies immune responses during tissue injury. Induces rapid UCP2-dependent mitochondrial rewiring that attenuates the generation of reactive oxygen species and preserves the integrity of Krebs cycle required for persistent production of itaconate and subsequent GATA3-dependent differentiation of inflammation-resolving alternatively activated macrophages. In terms of biological role, in quiescent endothelia the uncleaved form is constitutively and abundantly expressed, and acts as a chromatin-associated nuclear factor with transcriptional repressor properties, it may sequester nuclear NF-kappaB/RELA, lowering expression of its targets. This form is rapidely lost upon angiogenic or pro-inflammatory activation. This Rattus norvegicus (Rat) protein is Interleukin-33.